We begin with the raw amino-acid sequence, 498 residues long: Envelop protein OPG153 (498 aa).

Cysteines 43 and 342 form a disulfide. Positions 352-391 (ATDTGHHQDSKINIKDDDVDDDDYNPKPTPIPEPYPRPPF) are disordered. Basic and acidic residues predominate over residues 355 to 367 (TGHHQDSKINIKD). Residues 378 to 390 (KPTPIPEPYPRPP) are compositionally biased toward pro residues.

It belongs to the orthopoxvirus OPG153 protein family. Interacts with proteins OPG094 and OPG143. Interacts with OPG154. Interacts with OPG152. Interacts with host laminin.

Its subcellular location is the virion membrane. Functionally, envelop protein that mediates acid-dependent endocytosis into host cells. Plays an important role in endocytic entry of the virus by acting as an acid-sensitive membrane fusion suppressor. Low pH in host endosomes triggers conformational changes to allow de-repression of viral fusion complex activity and membrane fusion within vesicles. Also plays a role in bridging the mature virion with structural protein OPG152. The polypeptide is Envelop protein OPG153 (Protein OPG153) (Variola virus (isolate Human/India/Ind3/1967) (VARV)).